A 666-amino-acid polypeptide reads, in one-letter code: Calmodulin-binding receptor kinase CaMRLK (666 aa).

The first 17 residues, 1–17, serve as a signal peptide directing secretion; sequence MFLKLFLLLSLVSFSHS. Over 18 to 297 the chain is Extracellular; the sequence is DSSSTVSCPN…KTHRTNHTPL (280 aa). N-linked (GlcNAc...) asparagine glycans are attached at residues Asn27, Asn45, Asn52, Asn68, Asn78, Asn89, Asn110, Asn126, Asn137, Asn148, Asn154, Asn189, Asn212, Asn229, and Asn261. LRR repeat units lie at residues 79 to 103, 105 to 127, 130 to 152, 153 to 177, 178 to 197, 198 to 224, and 226 to 246; these read LTRL…LWSM, GLVS…PVNG, LSAV…FTGF, TNLT…SLSG, LRHL…PISG, LKSL…NLNH, and QFLN…KYRK. A helical membrane pass occupies residues 298–318; sequence VIGLSSSLGALIIVIFAAAII. The interval 319 to 337 is calmodulin binding; the sequence is LIRRRMKSARTKSRWAISN. Residues 319–666 are Cytoplasmic-facing; it reads LIRRRMKSAR…LLKDIRTVSR (348 aa). One can recognise a Protein kinase domain in the interval 395 to 661; it reads FGTESVISDG…QQVLGLLKDI (267 aa). ATP is bound by residues 401–409 and Lys423; that span reads ISDGTCGPL.

This sequence belongs to the protein kinase superfamily. Ser/Thr protein kinase family. Binds calmodulin (CaM) in a calcium-dependent manner. Interacts with CAM1, but not with CAM8. The cofactor is Mn(2+). It depends on Mg(2+) as a cofactor. Calmodulin (CaM)-independent autophosphorylation. In terms of tissue distribution, expressed in reproductive and vegetative tissues, with higher levels in seedlings and flowers, but not in leaves.

The protein resides in the cell membrane. The enzyme catalyses L-seryl-[protein] + ATP = O-phospho-L-seryl-[protein] + ADP + H(+). It carries out the reaction L-threonyl-[protein] + ATP = O-phospho-L-threonyl-[protein] + ADP + H(+). Not stimulated by calmodulin (CaM). Its function is as follows. Can phosphorylate the myelin basic protein in vitro. Required for endosperm development in embryos. Maybe involved in auxin and osmotic stress responses. This Arabidopsis thaliana (Mouse-ear cress) protein is Calmodulin-binding receptor kinase CaMRLK.